Reading from the N-terminus, the 213-residue chain is Phosphatidylserine decarboxylase proenzyme (213 aa).

The active-site Schiff-base intermediate with substrate; via pyruvic acid is the Ser180. The residue at position 180 (Ser180) is a Pyruvic acid (Ser); by autocatalysis.

The protein belongs to the phosphatidylserine decarboxylase family. PSD-A subfamily. In terms of assembly, heterodimer of a large membrane-associated beta subunit and a small pyruvoyl-containing alpha subunit. Pyruvate serves as cofactor. Is synthesized initially as an inactive proenzyme. Formation of the active enzyme involves a self-maturation process in which the active site pyruvoyl group is generated from an internal serine residue via an autocatalytic post-translational modification. Two non-identical subunits are generated from the proenzyme in this reaction, and the pyruvate is formed at the N-terminus of the alpha chain, which is derived from the carboxyl end of the proenzyme. The post-translation cleavage follows an unusual pathway, termed non-hydrolytic serinolysis, in which the side chain hydroxyl group of the serine supplies its oxygen atom to form the C-terminus of the beta chain, while the remainder of the serine residue undergoes an oxidative deamination to produce ammonia and the pyruvoyl prosthetic group on the alpha chain.

The protein localises to the cell membrane. It carries out the reaction a 1,2-diacyl-sn-glycero-3-phospho-L-serine + H(+) = a 1,2-diacyl-sn-glycero-3-phosphoethanolamine + CO2. Its pathway is phospholipid metabolism; phosphatidylethanolamine biosynthesis; phosphatidylethanolamine from CDP-diacylglycerol: step 2/2. Catalyzes the formation of phosphatidylethanolamine (PtdEtn) from phosphatidylserine (PtdSer). The polypeptide is Phosphatidylserine decarboxylase proenzyme (Carboxydothermus hydrogenoformans (strain ATCC BAA-161 / DSM 6008 / Z-2901)).